Reading from the N-terminus, the 77-residue chain is Translation initiation factor IF-1, chloroplastic (77 aa).

One can recognise an S1-like domain in the interval 1 to 71 (MKEQKLIHEG…TKGRIIYRLR (71 aa)).

It belongs to the IF-1 family. In terms of assembly, component of the 30S ribosomal translation pre-initiation complex which assembles on the 30S ribosome in the order IF-2 and IF-3, IF-1 and N-formylmethionyl-tRNA(fMet); mRNA recruitment can occur at any time during PIC assembly.

It localises to the plastid. The protein localises to the chloroplast. Functionally, one of the essential components for the initiation of protein synthesis. Stabilizes the binding of IF-2 and IF-3 on the 30S subunit to which N-formylmethionyl-tRNA(fMet) subsequently binds. Helps modulate mRNA selection, yielding the 30S pre-initiation complex (PIC). Upon addition of the 50S ribosomal subunit IF-1, IF-2 and IF-3 are released leaving the mature 70S translation initiation complex. In Dioscorea elephantipes (Elephant's foot yam), this protein is Translation initiation factor IF-1, chloroplastic.